A 172-amino-acid polypeptide reads, in one-letter code: NADH-ubiquinone oxidoreductase chain 6 (172 aa).

5 consecutive transmembrane segments (helical) span residues 1-21 (MAFYLSFLMAALVGGMIAIAS), 24-44 (APYFAAFGLVVVAGVGCGILV), 53-73 (LILFLIYLGGMLVVFAYSAAL), 86-106 (VVFWRVMVYGLVVIVAAGFLL), and 140-160 (GKMLVICAWVLLLTLFVVLEV).

It belongs to the complex I subunit 6 family. As to quaternary structure, core subunit of respiratory chain NADH dehydrogenase (Complex I) which is composed of 45 different subunits.

Its subcellular location is the mitochondrion inner membrane. The catalysed reaction is a ubiquinone + NADH + 5 H(+)(in) = a ubiquinol + NAD(+) + 4 H(+)(out). Its function is as follows. Core subunit of the mitochondrial membrane respiratory chain NADH dehydrogenase (Complex I) which catalyzes electron transfer from NADH through the respiratory chain, using ubiquinone as an electron acceptor. Essential for the catalytic activity and assembly of complex I. This chain is NADH-ubiquinone oxidoreductase chain 6 (mt-nd6), found in Danio rerio (Zebrafish).